A 285-amino-acid polypeptide reads, in one-letter code: Pseudouridine-5'-phosphate glycosidase (285 aa).

Glu17 serves as the catalytic Proton donor. Residues Lys77 and Val97 each contribute to the substrate site. A Mn(2+)-binding site is contributed by Asp126. 128-130 (SQD) is a binding site for substrate. Catalysis depends on Lys147, which acts as the Nucleophile.

It belongs to the pseudouridine-5'-phosphate glycosidase family. In terms of assembly, homotrimer. It depends on Mn(2+) as a cofactor.

The catalysed reaction is D-ribose 5-phosphate + uracil = psi-UMP + H2O. In terms of biological role, catalyzes the reversible cleavage of pseudouridine 5'-phosphate (PsiMP) to ribose 5-phosphate and uracil. Functions biologically in the cleavage direction, as part of a pseudouridine degradation pathway. This Thermotoga maritima (strain ATCC 43589 / DSM 3109 / JCM 10099 / NBRC 100826 / MSB8) protein is Pseudouridine-5'-phosphate glycosidase.